The primary structure comprises 142 residues: Phosphoribosyl-AMP cyclohydrolase (142 aa).

Aspartate 92 provides a ligand contact to Mg(2+). Cysteine 93 is a Zn(2+) binding site. Mg(2+) contacts are provided by aspartate 94 and aspartate 96. Zn(2+) is bound by residues cysteine 109 and cysteine 116.

The protein belongs to the PRA-CH family. In terms of assembly, homodimer. Mg(2+) is required as a cofactor. The cofactor is Zn(2+).

It localises to the cytoplasm. The catalysed reaction is 1-(5-phospho-beta-D-ribosyl)-5'-AMP + H2O = 1-(5-phospho-beta-D-ribosyl)-5-[(5-phospho-beta-D-ribosylamino)methylideneamino]imidazole-4-carboxamide. It functions in the pathway amino-acid biosynthesis; L-histidine biosynthesis; L-histidine from 5-phospho-alpha-D-ribose 1-diphosphate: step 3/9. Its function is as follows. Catalyzes the hydrolysis of the adenine ring of phosphoribosyl-AMP. The polypeptide is Phosphoribosyl-AMP cyclohydrolase (Halorhodospira halophila (strain DSM 244 / SL1) (Ectothiorhodospira halophila (strain DSM 244 / SL1))).